Reading from the N-terminus, the 378-residue chain is Protein RecA (378 aa).

An ATP-binding site is contributed by Gly-79–Thr-86.

It belongs to the RecA family.

The protein localises to the cytoplasm. In terms of biological role, can catalyze the hydrolysis of ATP in the presence of single-stranded DNA, the ATP-dependent uptake of single-stranded DNA by duplex DNA, and the ATP-dependent hybridization of homologous single-stranded DNAs. It interacts with LexA causing its activation and leading to its autocatalytic cleavage. This is Protein RecA from Streptococcus pyogenes serotype M28 (strain MGAS6180).